A 330-amino-acid chain; its full sequence is Lipoyl synthase (330 aa).

The [4Fe-4S] cluster site is built by cysteine 77, cysteine 82, cysteine 88, cysteine 103, cysteine 107, cysteine 110, and serine 317. One can recognise a Radical SAM core domain in the interval 89 to 306 (FNHGTATFMI…RSEAERMGFE (218 aa)).

This sequence belongs to the radical SAM superfamily. Lipoyl synthase family. The cofactor is [4Fe-4S] cluster.

Its subcellular location is the cytoplasm. The enzyme catalyses [[Fe-S] cluster scaffold protein carrying a second [4Fe-4S](2+) cluster] + N(6)-octanoyl-L-lysyl-[protein] + 2 oxidized [2Fe-2S]-[ferredoxin] + 2 S-adenosyl-L-methionine + 4 H(+) = [[Fe-S] cluster scaffold protein] + N(6)-[(R)-dihydrolipoyl]-L-lysyl-[protein] + 4 Fe(3+) + 2 hydrogen sulfide + 2 5'-deoxyadenosine + 2 L-methionine + 2 reduced [2Fe-2S]-[ferredoxin]. It participates in protein modification; protein lipoylation via endogenous pathway; protein N(6)-(lipoyl)lysine from octanoyl-[acyl-carrier-protein]: step 2/2. Its function is as follows. Catalyzes the radical-mediated insertion of two sulfur atoms into the C-6 and C-8 positions of the octanoyl moiety bound to the lipoyl domains of lipoate-dependent enzymes, thereby converting the octanoylated domains into lipoylated derivatives. In Actinobacillus pleuropneumoniae serotype 5b (strain L20), this protein is Lipoyl synthase.